A 399-amino-acid polypeptide reads, in one-letter code: Protochlorophyllide reductase, chloroplastic (399 aa).

The transit peptide at 1–64 (MALQTASMLP…RQKVGAVRAE (64 aa)) directs the protein to the chloroplast.

It belongs to the short-chain dehydrogenases/reductases (SDR) family. POR subfamily.

It is found in the plastid. It localises to the chloroplast. It catalyses the reaction chlorophyllide a + NADP(+) = protochlorophyllide a + NADPH + H(+). It participates in porphyrin-containing compound metabolism; chlorophyll biosynthesis. In terms of biological role, phototransformation of protochlorophyllide (Pchlide) to chlorophyllide (Chlide). The protein is Protochlorophyllide reductase, chloroplastic (3PCR) of Pisum sativum (Garden pea).